A 73-amino-acid chain; its full sequence is Conotoxin Asp7/Gla(3)-TxVI (73 aa).

Positions 1-19 (MQKLIILLLVAAVLMSTQA) are cleaved as a signal peptide. Residues 20–44 (VLQEKRPKEKIKFLSKRKTDAEKQQ) constitute a propeptide that is removed on maturation. Intrachain disulfides connect Cys48–Cys62, Cys55–Cys66, and Cys61–Cys71. A 4-hydroxyproline mark is found at Pro49 and Pro54. Residue Glu60 is modified to 4-carboxyglutamate. Residue Trp64 is modified to 6'-bromotryptophan.

Expressed by the venom duct.

It is found in the secreted. In Conus textile (Cloth-of-gold cone), this protein is Conotoxin Asp7/Gla(3)-TxVI.